The primary structure comprises 259 residues: Major prion protein (259 aa).

An N-terminal signal peptide occupies residues 1 to 24 (MGKIQLGYWILVLFIVTWSDLGLC). The segment at 25–235 (KKPKPRPGGG…EYEAAAQRAY (211 aa)) is interaction with GRB2, ERI3 and SYN1. Residues 29–110 (PRPGGGWNSG…GYNKWKPDKP (82 aa)) are disordered. Gly-63, Gly-64, His-72, Gly-74, His-82, Gly-84, His-92, and Gly-94 together coordinate Cu(2+). The span at 91–101 (PHGGSNWGQGG) shows a compositional bias: gly residues. The cysteines at positions 184 and 219 are disulfide-linked. N-linked (GlcNAc...) asparagine glycans are attached at residues Asn-186 and Asn-202. Asn-236 carries the GPI-anchor amidated asparagine lipid modification. A propeptide spans 237 to 259 (MAFFSAPPVTLLFLSFLIFLIVS) (removed in mature form).

The protein belongs to the prion family. Monomer and homodimer. Has a tendency to aggregate into amyloid fibrils containing a cross-beta spine, formed by a steric zipper of superposed beta-strands. Soluble oligomers may represent an intermediate stage on the path to fibril formation. Copper binding may promote oligomerization. Interacts with GRB2, APP, ERI3/PRNPIP and SYN1. Mislocalized cytosolically exposed PrP interacts with MGRN1; this interaction alters MGRN1 subcellular location and causes lysosomal enlargement. Interacts with KIAA1191.

It localises to the cell membrane. The protein localises to the golgi apparatus. In terms of biological role, its primary physiological function is unclear. Has cytoprotective activity against internal or environmental stresses. May play a role in neuronal development and synaptic plasticity. May be required for neuronal myelin sheath maintenance. May play a role in iron uptake and iron homeostasis. Soluble oligomers are toxic to cultured neuroblastoma cells and induce apoptosis (in vitro). Association with GPC1 (via its heparan sulfate chains) targets PRNP to lipid rafts. Also provides Cu(2+) or Zn(2+) for the ascorbate-mediated GPC1 deaminase degradation of its heparan sulfate side chains. In Trichosurus vulpecula (Brush-tailed possum), this protein is Major prion protein (PRNP).